A 199-amino-acid chain; its full sequence is Recombination protein RecR (199 aa).

The C4-type zinc-finger motif lies at 57–72 (CQSCRTYTEETLCPIC). A Toprim domain is found at 81 to 176 (STICVVETPA…MISRIAHGVP (96 aa)).

Belongs to the RecR family.

May play a role in DNA repair. It seems to be involved in an RecBC-independent recombinational process of DNA repair. It may act with RecF and RecO. This Shewanella baltica (strain OS155 / ATCC BAA-1091) protein is Recombination protein RecR.